Consider the following 209-residue polypeptide: Large ribosomal subunit protein uL3 (209 aa).

Gln-150 carries the post-translational modification N5-methylglutamine.

The protein belongs to the universal ribosomal protein uL3 family. As to quaternary structure, part of the 50S ribosomal subunit. Forms a cluster with proteins L14 and L19. Methylated by PrmB.

Its function is as follows. One of the primary rRNA binding proteins, it binds directly near the 3'-end of the 23S rRNA, where it nucleates assembly of the 50S subunit. The chain is Large ribosomal subunit protein uL3 from Vibrio cholerae serotype O1 (strain ATCC 39541 / Classical Ogawa 395 / O395).